Reading from the N-terminus, the 92-residue chain is MEIKSDHSEHGFQFPGTFELSVVGTAGKALETELPRLLALCGVELVQERISWKHSSTGKYVSVRIGFRALDREQYDAAHQVLRDHPEVKWTL.

Belongs to the UPF0250 family.

This is UPF0250 protein PD_0532 from Xylella fastidiosa (strain Temecula1 / ATCC 700964).